We begin with the raw amino-acid sequence, 147 residues long: Hemoglobin subunit deltaH (147 aa).

Residues Arg-3–His-147 form the Globin domain. Residues His-64 and His-93 each coordinate heme b.

It belongs to the globin family. Heterotetramer of two delta chains and two alpha chains. Red blood cells.

The chain is Hemoglobin subunit deltaH from Heterohyrax brucei (Yellow-spotted hyrax).